Reading from the N-terminus, the 639-residue chain is Putative cyclic beta-1,2-glucan modification protein (639 aa).

6 consecutive transmembrane segments (helical) span residues 34–54, 69–89, 96–116, 144–164, 185–205, and 227–247; these read ALFT…IVRW, PAWT…ALFG, LLIA…QVFL, WTAV…ALLL, FALP…FSWI, and FALA…AGYM.

It localises to the cell membrane. The chain is Putative cyclic beta-1,2-glucan modification protein (cgmA) from Rhizobium meliloti (strain 1021) (Ensifer meliloti).